Consider the following 88-residue polypeptide: Gene 86 protein (88 aa).

The polypeptide is Gene 86 protein (86) (Mycobacterium phage D29 (Mycobacteriophage D29)).